Consider the following 398-residue polypeptide: MSALLRSSLRFKHMSAVNRLTQQLRLLTASAPLSAANTAGKAPFKVAVVGSGNWGTTVAKIVAENCTAHPELFEPEVRVWVREEKVNGKNLTDIFNAEHENVRYLPKIKLPHNLIAEPDLLKAVEGANIIVFNLPHQFLAGVCKQLKGHVNPKARAISCLKGLDVTPQGVYLLSDVIENETGLHCGVLSGANLATEIALEKYSETTVAYNRPKDFFGEGDVTNDVLKALFHRPYFHVRCVQDVAGVSIGGALKNVVALCAGFVEGKNWGDNAKAAIMRRGMLEMINFSKRFFPETDINTLTVESAGVADLITSCAGGRNFKVGRAFGKESGSGKTIQDVEKELLNGQSAQGVITCNEVHELLKNKNMQKDFPLFESTWGIIHGELKIDDLPEILYHAN.

Residues 50–55 (GSGNWG), phenylalanine 138, lysine 161, and alanine 194 each bind NAD(+). Position 161 (lysine 161) interacts with substrate. Lysine 253 functions as the Proton acceptor in the catalytic mechanism. 2 residues coordinate NAD(+): arginine 318 and glutamine 350. Substrate is bound at residue 318–319 (RN).

This sequence belongs to the NAD-dependent glycerol-3-phosphate dehydrogenase family.

It localises to the cytoplasm. The enzyme catalyses sn-glycerol 3-phosphate + NAD(+) = dihydroxyacetone phosphate + NADH + H(+). The sequence is that of Glycerol-3-phosphate dehydrogenase [NAD(+)] 1 (GPD1) from Yarrowia lipolytica (strain CLIB 122 / E 150) (Yeast).